The sequence spans 391 residues: Multidrug resistance protein MdtL (391 aa).

Residues 1–3 (MSR) are Cytoplasmic-facing. Residues 4–24 (FLICSFALVLLYPAGIDMYLV) traverse the membrane as a helical segment. Over 25–37 (GLPRIAADLNASE) the chain is Periplasmic. The helical transmembrane segment at 38–58 (AQLHIAFSVYLAGMAAAMLFA) threads the bilayer. The Cytoplasmic segment spans residues 59-75 (GKMADRSGRKPVAIPGS). A helical transmembrane segment spans residues 76 to 96 (ALFIIASVFCSLAETSTLFLA). The Periplasmic segment spans residues 97–98 (GR). Residues 99-119 (FLQGLGAGCCYVVAFAILRDT) traverse the membrane as a helical segment. Topologically, residues 120–130 (LDDRRRAKVLS) are cytoplasmic. The helical transmembrane segment at 131 to 151 (LLNGITCIIPVLAPVLGHLIM) threads the bilayer. Residues 152 to 157 (LKFPWQ) lie on the Periplasmic side of the membrane. A helical transmembrane segment spans residues 158-178 (SLFWAMAMMGIAVLMLSLFIL). At 179–202 (KETRPASPAASDKPRENSESLLNR) the chain is on the cytoplasmic side. Residues 203-222 (FFLSRVVITTLSVSVILTFV) traverse the membrane as a helical segment. Topologically, residues 223 to 244 (NTSPVLLMEIMGFERGEYATIM) are periplasmic. A helical transmembrane segment spans residues 245–265 (ALTAGVSMTFSFSTPFALGIF). Residues 266–268 (KPR) lie on the Cytoplasmic side of the membrane. A helical transmembrane segment spans residues 269–289 (TLMITSQVLFLAAGITLAVSP). Residues 290 to 292 (SHA) are Periplasmic-facing. A helical transmembrane segment spans residues 293–313 (VSLFGITLICAGFSVGFGVAM). Over 314-330 (SQALGPFSLRAGVASST) the chain is Cytoplasmic. Residues 331-351 (LGIAQVCGSSLWIWLAAVVGI) traverse the membrane as a helical segment. Over 352–355 (GAWN) the chain is Periplasmic. A helical transmembrane segment spans residues 356–376 (MLIGILIACSIVSLLLIMFVA). Residues 377 to 391 (PGRPVAAHEEIHHHA) lie on the Cytoplasmic side of the membrane.

The protein belongs to the major facilitator superfamily. DHA1 family. MdtL (TC 2.A.1.2.22) subfamily.

It is found in the cell inner membrane. The sequence is that of Multidrug resistance protein MdtL from Shigella flexneri serotype 5b (strain 8401).